The sequence spans 338 residues: Lipoate-protein ligase A (338 aa).

Residues proline 29–valine 216 enclose the BPL/LPL catalytic domain. ATP contacts are provided by residues arginine 71, glycine 76–phenylalanine 79, and lysine 134. (R)-lipoate is bound at residue lysine 134.

This sequence belongs to the LplA family. As to quaternary structure, monomer.

The protein localises to the cytoplasm. It carries out the reaction L-lysyl-[lipoyl-carrier protein] + (R)-lipoate + ATP = N(6)-[(R)-lipoyl]-L-lysyl-[lipoyl-carrier protein] + AMP + diphosphate + H(+). It participates in protein modification; protein lipoylation via exogenous pathway; protein N(6)-(lipoyl)lysine from lipoate: step 1/2. It functions in the pathway protein modification; protein lipoylation via exogenous pathway; protein N(6)-(lipoyl)lysine from lipoate: step 2/2. Functionally, catalyzes both the ATP-dependent activation of exogenously supplied lipoate to lipoyl-AMP and the transfer of the activated lipoyl onto the lipoyl domains of lipoate-dependent enzymes. This Enterobacter sp. (strain 638) protein is Lipoate-protein ligase A.